We begin with the raw amino-acid sequence, 474 residues long: Dihydrolipoyl dehydrogenase (474 aa).

Residues 34-42, Lys51, and Gly114 contribute to the FAD site; that span reads EKEKLGGTC. The cysteines at positions 42 and 47 are disulfide-linked. Residues 188–192, Glu211, Val245, and 278–281 each bind NAD(+); these read GGGVI and SIGR. 2 residues coordinate FAD: Asp320 and Ala328. His453 serves as the catalytic Proton acceptor.

This sequence belongs to the class-I pyridine nucleotide-disulfide oxidoreductase family. Homodimer. Requires FAD as cofactor.

The protein resides in the cytoplasm. It carries out the reaction N(6)-[(R)-dihydrolipoyl]-L-lysyl-[protein] + NAD(+) = N(6)-[(R)-lipoyl]-L-lysyl-[protein] + NADH + H(+). In terms of biological role, the branched-chain alpha-keto dehydrogenase complex catalyzes the overall conversion of alpha-keto acids to acyl-CoA and CO(2). It contains multiple copies of 3 enzymatic components: branched-chain alpha-keto acid decarboxylase (E1), lipoamide acyltransferase (E2) and lipoamide dehydrogenase (E3). The protein is Dihydrolipoyl dehydrogenase (bfmBC) of Bacillus subtilis (strain 168).